The chain runs to 350 residues: Cytosolic sulfotransferase 18 (350 aa).

At M1 the chain carries N-acetylmethionine. Residues M1–L17 are compositionally biased toward low complexity. A disordered region spans residues M1 to T28. Over residues S19–T28 the composition is skewed to basic and acidic residues. 3'-phosphoadenylyl sulfate is bound at residue K93 to W98. Residue H155 is the Proton acceptor of the active site. 3'-phosphoadenylyl sulfate contacts are provided by residues R177, S185, Y243, and R313–G315.

It belongs to the sulfotransferase 1 family. In terms of tissue distribution, expressed in roots, leaves and stems. Barely detected in siliques and flowers.

The protein resides in the cytoplasm. The catalysed reaction is an aliphatic (Z)-desulfo-glucosinolate + 3'-phosphoadenylyl sulfate = a (Z)-omega-(methylsulfanyl)-N-sulfo-alkylhydroximate S-glucoside + adenosine 3',5'-bisphosphate + H(+). With respect to regulation, inhibited by phosphoadenosine 5'-phosphate (PAP). Functionally, sulfotransferase that utilizes 3'-phospho-5'-adenylyl sulfate (PAPS) as sulfonate donor to catalyze the sulfate conjugation of desulfo-glucosinolates (dsGSs), the final step in the biosynthesis of the glucosinolate core structure. Preferred substrate are the long-chain desulfo-glucosinolates, 7-methylthioheptyl and 8-methylthiooctyl, derived from methionine. Substrate preference is desulfo-benzyl glucosinolate &gt; desulfo-4-methylthiobutyl glucosinolate &gt; desulfo-6-methylthiohexyl glucosinolate &gt; desulfo-3-methylthiopropyl glucosinolate &gt; desulfo-indol-3-yl methyl glucosinolate &gt; desulfo-singrin &gt; desulfo-3-butenyl glucosinolate. The polypeptide is Cytosolic sulfotransferase 18 (SOT18) (Arabidopsis thaliana (Mouse-ear cress)).